Here is a 956-residue protein sequence, read N- to C-terminus: MARMSFLSFLLFCLTSVAHGNKANKHKPWIETEYQGIVMENDNTVLLNPPLFALDKDAPLHYAGEICGFRVHNGPGGSGSAQFEAVVLDRSTGEGLVRSKEPLDCESQKEHSFTIQAYDCGEGPDGTNSKKSHKATVHVRVNDVNEFSPVFVERRYEASVPEGRLFDRIVRVEAVDADCSPQYSQICFYDIITPNVPFTIDNDGNIKNTEPLDSKRQRVHSFWVTAFDCGKNRAQADAQVIVTVKPSCKPGWIGWTKRIEYTPGSGSIPLFPNLHLETCEETVWNIQATVELQTSHIGKGCDRDSYSDRSVRRLCGAVRGEVDLLPPPSPATNWTAALPTLPSSDSSLVFSFNGSTHVAVVPDSVASAVSGDHFTLQLWMRRGGASTQPPANQARGTRKEEETIVCSTVKNDDSYSHYSLSVHGCRLSLFYWPDVSAARPVKFLWKLEQVCDSEWHHLSLSVQFPSVTLYVDGVTFDPALIHDNGAIPNPAPHQRLVIGACWEPEEKPKDIVNNTMPENKDTGKFVSGYKGLLSGVTVRPGNVEPHSVVECLYACREGLDFGDLETLGSGMKVHVNPSQSVLVLEGDDIESFNRAVQQVTYRNSLRFATPGVRPLKLTTSLRCFSEESCLSLRQLEGYLVVLQPDAPQISLSGVGPHLARPAAEFEGPQGVPLFPELRIVCSLSHAVNTAAQGMEGGALMSDAVAHTLDGCEVQPLGEELNTEREELLVDMESLRERGLDIINTTAYIAITGAESISVYEDVLRSIHYRLAKGSARFERRFRLSCSEMNGRYTSNELTLEVNFLHSLDSLYHPSHLLASQQQFLHPSHHTGELSGHTLPNPHRNSVVPGAATVIIMVCVGFLVVMVILGVFRIRSIHRRGEGARGGGKEGGNQWDDSALTIIVNPMETYENRMGITTDMEGECEDEEEVVDSPDDTSDDQRIIIKKEGRDSAPRRY.

The first 20 residues, 1–20, serve as a signal peptide directing secretion; it reads MARMSFLSFLLFCLTSVAHG. Topologically, residues 21–850 are extracellular; that stretch reads NKANKHKPWI…PHRNSVVPGA (830 aa). 2 Cadherin domains span residues 30–151 and 152–271; these read IETE…SPVF and VERR…IPLF. 4 N-linked (GlcNAc...) asparagine glycosylation sites follow: N333, N353, N513, and N743. The chain crosses the membrane as a helical span at residues 851-871; the sequence is ATVIIMVCVGFLVVMVILGVF. Over 872–956 the chain is Cytoplasmic; it reads RIRSIHRRGE…EGRDSAPRRY (85 aa). Acidic residues predominate over residues 921 to 937; sequence GECEDEEEVVDSPDDTS. The disordered stretch occupies residues 921–956; the sequence is GECEDEEEVVDSPDDTSDDQRIIIKKEGRDSAPRRY. The span at 938–956 shows a compositional bias: basic and acidic residues; it reads DDQRIIIKKEGRDSAPRRY.

It belongs to the calsyntenin family. As to quaternary structure, homooligomer and heterooligomer; mediates both homophilic and heterophilc interactions with clstn1 and clstn2 paralogs via cadherin domains. Interacts (via cadherin domains) with both alpha and beta isoforms of neurexins. As to expression, by 48 hours post-fertilization (hpf), widely expressed in the brain, with strong expression in the telencephalon and the midbrain. Not expressed in the optic tectum.

The protein resides in the postsynaptic cell membrane. The protein localises to the endoplasmic reticulum membrane. Its subcellular location is the golgi apparatus membrane. Synaptic adhesion molecule. Promotes synapse development by acting as a cell adhesion molecule at the postsynaptic membrane, which associates with presynaptic neurexins. In Danio rerio (Zebrafish), this protein is Calsyntenin-3.